The following is a 148-amino-acid chain: NPC intracellular cholesterol transporter 2 homolog a (148 aa).

Positions 1 to 16 (MLRYAVIACAALVVFA) are cleaved as a signal peptide. Disulfide bonds link C24-C140, C39-C46, and C92-C99. Residue N51 is glycosylated (N-linked (GlcNAc...) asparagine).

This sequence belongs to the NPC2 family. As to expression, broadly expressed with a higher level of expression in many tissues, including midgut, salivary gland and ventral nerve cord.

It is found in the secreted. Functionally, functions redundantly with Npc2b in regulating sterol homeostasis and ecdysteroid biosynthesis, probably by controlling the availability of sterol substrate. In Drosophila melanogaster (Fruit fly), this protein is NPC intracellular cholesterol transporter 2 homolog a.